A 206-amino-acid polypeptide reads, in one-letter code: Sclerostin domain-containing protein 1 (206 aa).

Residues 1–23 (MLPPAIHLSLIPLLCILMKNCLA) form the signal peptide. Residues 42–62 (AHPSSNSTLNQARNGGRHFSS) are disordered. Over residues 43–62 (HPSSNSTLNQARNGGRHFSS) the composition is skewed to polar residues. N47 carries an N-linked (GlcNAc...) asparagine glycan. 4 cysteine pairs are disulfide-bonded: C75–C133, C89–C147, C100–C163, and C104–C165. Positions 75–170 (CRELRSTKYI…TACKCKRYTR (96 aa)) constitute a CTCK domain. The N-linked (GlcNAc...) asparagine glycan is linked to N173. The interval 176–206 (SHNFESVSPAKPAQHHRERKRASKSSKHSLS) is disordered. The span at 188–206 (AQHHRERKRASKSSKHSLS) shows a compositional bias: basic residues.

Belongs to the sclerostin family. In terms of assembly, interacts with BMP2, BMP4, BMP6 and BMP7 with high affinity. In terms of tissue distribution, highly expressed within the maximally sensitized/receptive endometrium. Weakly expressed in brain, kidney and the female reproductive tract. Expressed in the dermal papilla (DP) and at high level in the precortex of both anagen vibrissae and pelage follicles. Dynymic expression during the hair cycle.

It is found in the secreted. Directly antagonizes activity of BMP2, BMP4, BMP6 and BMP7 in a dose-dependent manner. May be involved in the onset of endometrial receptivity for implantation/sensitization for the decidual cell reaction. Enhances Wnt signaling and inhibits TGF-beta signaling. The polypeptide is Sclerostin domain-containing protein 1 (Sostdc1) (Rattus norvegicus (Rat)).